We begin with the raw amino-acid sequence, 579 residues long: General transcription and DNA repair factor IIH subunit TFB1-3 (579 aa).

2 BSD domains span residues 107–161 (LTPA…GKDS) and 186–238 (RTNR…YLYS).

This sequence belongs to the TFB1 family. In terms of assembly, component of the 7-subunit TFIIH core complex composed of XPB, XPD, TFB1/GTF2H1, GTF2H2/P44, TFB4/GTF2H3, TFB2/GTF2H4 and TFB5/GTF2H5, which is active in NER. The core complex associates with the 3-subunit CDK-activating kinase (CAK) module composed of CYCH1/cyclin H1, CDKD and MAT1/At4g30820 to form the 10-subunit holoenzyme (holo-TFIIH) active in transcription.

The protein resides in the nucleus. In terms of biological role, component of the general transcription and DNA repair factor IIH (TFIIH) core complex, which is involved in general and transcription-coupled nucleotide excision repair (NER) of damaged DNA and, when complexed to CAK, in RNA transcription by RNA polymerase II. In NER, TFIIH acts by opening DNA around the lesion to allow the excision of the damaged oligonucleotide and its replacement by a new DNA fragment. In transcription, TFIIH has an essential role in transcription initiation. When the pre-initiation complex (PIC) has been established, TFIIH is required for promoter opening and promoter escape. Phosphorylation of the C-terminal tail (CTD) of the largest subunit of RNA polymerase II by the kinase module CAK controls the initiation of transcription. This chain is General transcription and DNA repair factor IIH subunit TFB1-3, found in Arabidopsis thaliana (Mouse-ear cress).